The sequence spans 380 residues: Glutamate 5-kinase (380 aa).

Lys-15 is an ATP binding site. Substrate is bound by residues Ser-59, Asp-146, and Asn-158. 178 to 179 (TD) is an ATP binding site. The PUA domain occupies 285-363 (RGSVTVDAGA…AEFERLLGYA (79 aa)).

It belongs to the glutamate 5-kinase family.

The protein resides in the cytoplasm. It carries out the reaction L-glutamate + ATP = L-glutamyl 5-phosphate + ADP. The protein operates within amino-acid biosynthesis; L-proline biosynthesis; L-glutamate 5-semialdehyde from L-glutamate: step 1/2. Catalyzes the transfer of a phosphate group to glutamate to form L-glutamate 5-phosphate. The chain is Glutamate 5-kinase from Acidovorax ebreus (strain TPSY) (Diaphorobacter sp. (strain TPSY)).